Here is a 668-residue protein sequence, read N- to C-terminus: UvrABC system protein B (668 aa).

Residues glutamine 31–arginine 416 enclose the Helicase ATP-binding domain. Residue glycine 44–threonine 51 participates in ATP binding. The short motif at tyrosine 97–isoleucine 120 is the Beta-hairpin element. Positions glutamine 433–isoleucine 596 constitute a Helicase C-terminal domain. Residues glutamate 621–glutamine 656 form the UVR domain.

Belongs to the UvrB family. In terms of assembly, forms a heterotetramer with UvrA during the search for lesions. Interacts with UvrC in an incision complex.

It is found in the cytoplasm. In terms of biological role, the UvrABC repair system catalyzes the recognition and processing of DNA lesions. A damage recognition complex composed of 2 UvrA and 2 UvrB subunits scans DNA for abnormalities. Upon binding of the UvrA(2)B(2) complex to a putative damaged site, the DNA wraps around one UvrB monomer. DNA wrap is dependent on ATP binding by UvrB and probably causes local melting of the DNA helix, facilitating insertion of UvrB beta-hairpin between the DNA strands. Then UvrB probes one DNA strand for the presence of a lesion. If a lesion is found the UvrA subunits dissociate and the UvrB-DNA preincision complex is formed. This complex is subsequently bound by UvrC and the second UvrB is released. If no lesion is found, the DNA wraps around the other UvrB subunit that will check the other stand for damage. The polypeptide is UvrABC system protein B (Chlamydia trachomatis serovar A (strain ATCC VR-571B / DSM 19440 / HAR-13)).